Here is a 494-residue protein sequence, read N- to C-terminus: MSNYSGLNEECGVFGIWNHPEAAQLTYMGLHSLQHRGQEGAGIVVSNHETLKGERGLGLLTEAIKDEHMSNIKGYPHAIGHVRYATSGNKGIENIQPFLYHFYDMSVGICHNGNLINAKSLRQNLEEQGAIFHSSSDTEVIMHLIRRSKAPTFEEALKESLRLIKGGFTFAILTKDALYGVVDPNAIRPLVVGKMENGAYILASETCAIDVLGAEFIQDIHAGEYVVITDEGIEVKTYTRQTTTAISAMEYIYFARPDSTIAGKNVHAVRKASGKRLAQENPAKADMVIGVPNSSLSAASGYAEEIGLPYEMGLVKNQYVARTFIQPTQELREQGVRVKLSAVKDIVDGKDIVLVDDSIVRGTTIKRIVKMLKDSGANRIHVRIASPEFMFPSFYGIDVSTTAELISASKSPEEIKNHIGADSLAYLSVDGLIESIGLDYDAPYHGLCVESFTGDYPAGLYDYEKNYKKHLSERQKSYIANNKHYFDSEGNLHV.

Positions 1–10 are excised as a propeptide; sequence MSNYSGLNEE. C11 functions as the Nucleophile in the catalytic mechanism. Positions 11-231 constitute a Glutamine amidotransferase type-2 domain; that stretch reads CGVFGIWNHP…AGEYVVITDE (221 aa). Residues S294, D356, and D357 each contribute to the Mg(2+) site.

It in the C-terminal section; belongs to the purine/pyrimidine phosphoribosyltransferase family. It depends on Mg(2+) as a cofactor.

It carries out the reaction 5-phospho-beta-D-ribosylamine + L-glutamate + diphosphate = 5-phospho-alpha-D-ribose 1-diphosphate + L-glutamine + H2O. The protein operates within purine metabolism; IMP biosynthesis via de novo pathway; N(1)-(5-phospho-D-ribosyl)glycinamide from 5-phospho-alpha-D-ribose 1-diphosphate: step 1/2. Catalyzes the formation of phosphoribosylamine from phosphoribosylpyrophosphate (PRPP) and glutamine. The chain is Amidophosphoribosyltransferase from Staphylococcus epidermidis (strain ATCC 35984 / DSM 28319 / BCRC 17069 / CCUG 31568 / BM 3577 / RP62A).